The following is a 542-amino-acid chain: Thermosome subunit (542 aa).

This sequence belongs to the TCP-1 chaperonin family. As to quaternary structure, forms an oligomeric complex of eight-membered rings.

In terms of biological role, molecular chaperone; binds unfolded polypeptides in vitro, and has a weak ATPase activity. The polypeptide is Thermosome subunit (ths) (Methanocaldococcus jannaschii (strain ATCC 43067 / DSM 2661 / JAL-1 / JCM 10045 / NBRC 100440) (Methanococcus jannaschii)).